Reading from the N-terminus, the 291-residue chain is ATP synthase subunit a (291 aa).

The next 6 helical transmembrane spans lie at 51–71 (FSFTNPSLFMLLTLSLVLLLV), 117–137 (FFPCIFVTFTFLLFCNLQGMI), 146–166 (HFLITLGLSFSIFIGITIVGF), 173–193 (FLSFLLPAGVPLPLAPFLVLL), 213–233 (MMAGHSLVKILSGFAWTMLCM), and 239–259 (FIGDLGPLFIVLALTGPELGV).

Belongs to the ATPase A chain family. As to quaternary structure, F-type ATPases have 2 components, CF(1) - the catalytic core - and CF(0) - the membrane proton channel. CF(1) has five subunits: alpha(3), beta(3), gamma(1), delta(1), epsilon(1). CF(0) has three main subunits: a, b and c.

The protein resides in the mitochondrion inner membrane. Its function is as follows. Mitochondrial membrane ATP synthase (F(1)F(0) ATP synthase or Complex V) produces ATP from ADP in the presence of a proton gradient across the membrane which is generated by electron transport complexes of the respiratory chain. F-type ATPases consist of two structural domains, F(1) - containing the extramembraneous catalytic core and F(0) - containing the membrane proton channel, linked together by a central stalk and a peripheral stalk. During catalysis, ATP synthesis in the catalytic domain of F(1) is coupled via a rotary mechanism of the central stalk subunits to proton translocation. Key component of the proton channel; it may play a direct role in the translocation of protons across the membrane. The sequence is that of ATP synthase subunit a (ATP6) from Vicia faba (Broad bean).